The chain runs to 78 residues: MNSKIDSAIPFIGSLTALISGYSLHEWASLFGILFGAVSVWIAYRKYKEDVQARKDELAYKMLVAKIEAKKLGIAIDE.

At 1-6 (MNSKID) the chain is on the cytoplasmic side. The chain crosses the membrane as a helical span at residues 7–23 (SAIPFIGSLTALISGYS). Topologically, residues 24-29 (LHEWAS) are periplasmic. The chain crosses the membrane as a helical span at residues 30 to 46 (LFGILFGAVSVWIAYRK). Residues 47-78 (YKEDVQARKDELAYKMLVAKIEAKKLGIAIDE) are Cytoplasmic-facing.

Its subcellular location is the host cell inner membrane. Its function is as follows. Accumulates harmlessly in the cytoplasmic membrane until it reaches a critical concentration that triggers the formation of nanometer-scale pores (pinholes) causing host cell membrane depolarization and endolysin refolding and release into the periplasmic space. Once the pinholin has permeabilized the host cell membrane, the SAR-endolysin is released into the periplasm and breaks down the peptidoglycan layer. Determines the precise timing of host cell lysis. Participates with the SAR-endolysin and the U-spanin protein in the sequential events which lead to the programmed host cell lysis releasing the mature viral particles from the host cell. The sequence is that of Holin (hol) from Haemophilus influenzae (Bacteriophage HP1).